Here is a 240-residue protein sequence, read N- to C-terminus: Triosephosphate isomerase (240 aa).

9 to 11 (NWK) is a substrate binding site. The active-site Electrophile is histidine 94. Catalysis depends on glutamate 163, which acts as the Proton acceptor. Substrate contacts are provided by residues glycine 169, serine 202, and 223 to 224 (GG).

It belongs to the triosephosphate isomerase family. In terms of assembly, homodimer.

The protein resides in the cytoplasm. It catalyses the reaction D-glyceraldehyde 3-phosphate = dihydroxyacetone phosphate. The protein operates within carbohydrate biosynthesis; gluconeogenesis. It functions in the pathway carbohydrate degradation; glycolysis; D-glyceraldehyde 3-phosphate from glycerone phosphate: step 1/1. Functionally, involved in the gluconeogenesis. Catalyzes stereospecifically the conversion of dihydroxyacetone phosphate (DHAP) to D-glyceraldehyde-3-phosphate (G3P). This Gloeobacter violaceus (strain ATCC 29082 / PCC 7421) protein is Triosephosphate isomerase.